The sequence spans 413 residues: DNA primase large subunit PriL (413 aa).

Positions 230, 301, 310, and 317 each coordinate [4Fe-4S] cluster. Composition is skewed to basic and acidic residues over residues 340–356 (MEKE…QEEK), 362–381 (KEKQ…EEKG), and 388–413 (KKRE…KKRI). Positions 340 to 413 (MEKEKEEKEE…KEKQEEKKRI (74 aa)) are disordered.

It belongs to the eukaryotic-type primase large subunit family. As to quaternary structure, heterodimer of a small subunit (PriS) and a large subunit (PriL). It depends on [4Fe-4S] cluster as a cofactor.

In terms of biological role, regulatory subunit of DNA primase, an RNA polymerase that catalyzes the synthesis of short RNA molecules used as primers for DNA polymerase during DNA replication. Stabilizes and modulates the activity of the small subunit, increasing the rate of DNA synthesis, and conferring RNA synthesis capability. The DNA polymerase activity may enable DNA primase to also catalyze primer extension after primer synthesis. May also play a role in DNA repair. The protein is DNA primase large subunit PriL of Methanosarcina barkeri (strain Fusaro / DSM 804).